A 1023-amino-acid chain; its full sequence is DNA polymerase (1023 aa).

The disordered stretch occupies residues 726–751 (QTDATRKHRQCTPTSNSSSDEDAPFY).

This sequence belongs to the DNA polymerase type-B family. Heterodimer with the terminal protein; this heterodimer binds to bp 9 to 18 of the genome. Forms a complex with viral pTP, DBP and hosts NFIA and POU2F1/OCT1 for initiation of replication.

It localises to the host nucleus. It carries out the reaction DNA(n) + a 2'-deoxyribonucleoside 5'-triphosphate = DNA(n+1) + diphosphate. Functionally, eukaryotic-type DNA polymerase involved in viral genomic replication. DNA synthesis is protein primed, and acts in a strand displacement replication. Assembles in complex with viral pTP, DBP, host NFIA and host POU2F1/OCT1 on viral origin of replication. The polymerase covalently transfers dCMP onto pTP, thereby initiating complementary strand synthesis. This chain is DNA polymerase, found in Bovine adenovirus B serotype 3 (BAdV-3).